The sequence spans 84 residues: UPF0457 protein BT9727_3043 (84 aa).

This sequence belongs to the UPF0457 family.

The sequence is that of UPF0457 protein BT9727_3043 from Bacillus thuringiensis subsp. konkukian (strain 97-27).